A 515-amino-acid chain; its full sequence is 2,3-bisphosphoglycerate-independent phosphoglycerate mutase (515 aa).

Residues D14 and S64 each coordinate Mn(2+). S64 acts as the Phosphoserine intermediate in catalysis. Residues H125, 155 to 156 (RD), R187, R193, 263 to 266 (RADR), and K337 each bind substrate. Residues D404, H408, D445, H446, and H464 each contribute to the Mn(2+) site.

This sequence belongs to the BPG-independent phosphoglycerate mutase family. As to quaternary structure, monomer. Requires Mn(2+) as cofactor.

It catalyses the reaction (2R)-2-phosphoglycerate = (2R)-3-phosphoglycerate. It functions in the pathway carbohydrate degradation; glycolysis; pyruvate from D-glyceraldehyde 3-phosphate: step 3/5. Catalyzes the interconversion of 2-phosphoglycerate and 3-phosphoglycerate. The sequence is that of 2,3-bisphosphoglycerate-independent phosphoglycerate mutase from Pseudomonas paraeruginosa (strain DSM 24068 / PA7) (Pseudomonas aeruginosa (strain PA7)).